The chain runs to 449 residues: Putative F-box/FBD/LRR-repeat protein At5g62970 (449 aa).

Residues 2 to 50 form the F-box domain; the sequence is DKISGFSDDELLVKILSFLPFKFAITTSVLSKQWKFLWMRVPKLEYDED. LRR repeat units follow at residues 27 to 52, 81 to 107, 158 to 185, 186 to 211, 252 to 279, and 328 to 354; these read TTSV…EDSM, GHRM…RLKF, TLKL…HLER, VTYG…VVEL, YFKL…NITA, and IHNA…EFDE. One can recognise an FBD domain in the interval 368 to 418; the sequence is FWNQPNSVPQCLLSTLQTFEWSGYPGSVQGKDLATYILRKSRQLKIATISI.

The chain is Putative F-box/FBD/LRR-repeat protein At5g62970 from Arabidopsis thaliana (Mouse-ear cress).